We begin with the raw amino-acid sequence, 375 residues long: Succinyl-diaminopimelate desuccinylase (375 aa).

His66 contacts Zn(2+). The active site involves Asp68. Asp99 contributes to the Zn(2+) binding site. Residue Glu133 is the Proton acceptor of the active site. Residues Glu134, Glu162, and His348 each contribute to the Zn(2+) site.

Belongs to the peptidase M20A family. DapE subfamily. As to quaternary structure, homodimer. Requires Zn(2+) as cofactor. The cofactor is Co(2+).

It catalyses the reaction N-succinyl-(2S,6S)-2,6-diaminopimelate + H2O = (2S,6S)-2,6-diaminopimelate + succinate. Its pathway is amino-acid biosynthesis; L-lysine biosynthesis via DAP pathway; LL-2,6-diaminopimelate from (S)-tetrahydrodipicolinate (succinylase route): step 3/3. In terms of biological role, catalyzes the hydrolysis of N-succinyl-L,L-diaminopimelic acid (SDAP), forming succinate and LL-2,6-diaminopimelate (DAP), an intermediate involved in the bacterial biosynthesis of lysine and meso-diaminopimelic acid, an essential component of bacterial cell walls. This Escherichia coli O7:K1 (strain IAI39 / ExPEC) protein is Succinyl-diaminopimelate desuccinylase.